We begin with the raw amino-acid sequence, 1423 residues long: MALVTVQRSPTPSTTSSPCASEADSGEEECRSQPRSISESFLTVKGAALFLPRGNGSSTPRISHRRNKHAGDLQQHLQAMFILLRPEDNIRLAVRLESTYQNRTRYMVVVSTNGRQDTEESIVLGMDFSSNDSSTCTMGLVLPLWSDTLIHLDGDGGFSVSTDNRVHIFKPVSVQAMWSALQSLHKACEVARAHNYYPGSLFLTWVSYYESHINSDQSSVNEWNAMQDVQSHRPDSPALFTDIPTERERTERLIKTKLREIMMQKDLENITSKEIRTELEMQMVCNLREFKEFIDNEMIVILGQMDSPTQIFEHVFLGSEWNASNLEDLQNRGVRYILNVTREIDNFFPGVFEYHNIRVYDEEATDLLAYWNDTYKFISKAKKHGSKCLVHCKMGVSRSASTVIAYAMKEYGWNLDRAYDYVKERRTVTKPNPSFMRQLEEYQGILLASKQRHNKLWRSHSDSDLSDHHEPICKPGLELNKKDITTSADQIAEVKTMESHPPIPPVFVEHMVPQDANQKGLCTKERMICLEFTSREFHAGQIEDELNLNDINGCSSGCCLNESKFPLDNCHASKALIQPGHVPEMANKFPDLTVEDLETDALKADMNVHLLPMEELTSPLKDPPMSPDPESPSPQPSCQTEISDFSTDRIDFFSALEKFVELSQETRSRSFSHSRMEELGGGRNESCRLSVVEVAPSKVTADDQRSSSLSNTPHASEESSMDEEQSKAISELVSPDIFMQSHSENAISVKEIVTEIESISQGVGQIQLKGDILPNPCHTPKKNSIHELLLERAQTPENKPGHMEQDEDSCTAQPELAKDSGMCNPEGCLTTHSSIADLEEGEPAEGEQELQGSGMHPGAKWYPGSVRRATLEFEERLRQEQEHHGAAPTCTSLSTRKNSKNDSSVADLAPKGKSDEAPPEHSFVLKEPEMSKGKGKYSGSEAGSLSHSEQNATVPAPRVLEFDHLPDPQEGPGSDTGTQQEGVLKDLRTVIPYQESETQAVPLPLPKRVEIIEYTHIVTSPNHTGPGSEIATSEKSGEQGLRKVNMEKSVTVLCTLDENLNRTLDPNQVSLHPQVLPLPHSSSPEHNRPTDHPTSILSSPEDRGSSLSTALETAAPFVSHTTHLLSASLDYLHPQTMVHLEGFTEQSSTTDEPSAEQVSWEESQESPLSSGSEVPYKDSQLSSADLSLISKLGDNTGELQEKMDPLPVACRLPHSSSSENIKSLSHSPGVVKERAKEIESRVVFQAGLTKPSQMRRSASLAKLGYLDLCKDCLPEREPASCESPHLKLLQPFLRTDSGMHAMEDQESLENPGAPHNPEPTKSFVEQLTTTECIVQSKPVERPLVQYAKEFGSSQQYLLPRAGLELTSSEGGLPVLQTQGLQCACPAPGLAVAPRQQHGRTHPLRRLKKANDKKRTTNPFYNTM.

Residues 1-37 (MALVTVQRSPTPSTTSSPCASEADSGEEECRSQPRSI) are disordered. Residues 9–18 (SPTPSTTSSP) show a composition bias toward low complexity. A phosphoserine mark is found at Ser-17, Ser-25, and Ser-36. A DEK-C domain is found at 248–303 (ERTERLIKTKLREIMMQKDLENITSKEIRTELEMQMVCNLREFKEFIDNEMIVILG). A Tyrosine-protein phosphatase domain is found at 307–448 (SPTQIFEHVF…LEEYQGILLA (142 aa)). Cys-392 serves as the catalytic Phosphocysteine intermediate. Phosphoserine occurs at positions 461, 487, 534, 631, and 633. Disordered regions lie at residues 617-641 (TSPL…CQTE), 664-684 (QETR…GGRN), 696-728 (PSKV…QSKA), 797-825 (ENKP…MCNP), 840-862 (EGEP…AKWY), 877-954 (LRQE…NATV), 962-981 (FDHL…TQQE), 1019-1041 (TSPN…EQGL), 1070-1108 (SLHP…SSLS), and 1144-1179 (TEQS…YKDS). Positions 621-635 (KDPPMSPDPESPSPQ) are enriched in pro residues. Residues 664–680 (QETRSRSFSHSRMEELG) are compositionally biased toward basic and acidic residues. Positions 889–904 (TCTSLSTRKNSKNDSS) are enriched in polar residues. Over residues 910 to 932 (PKGKSDEAPPEHSFVLKEPEMSK) the composition is skewed to basic and acidic residues. Residues 941-953 (EAGSLSHSEQNAT) show a composition bias toward polar residues. Residues 1019–1034 (TSPNHTGPGSEIATSE) show a composition bias toward polar residues. Residues 1144–1172 (TEQSSTTDEPSAEQVSWEESQESPLSSGS) are compositionally biased toward polar residues. A Phosphoserine modification is found at Ser-1217. Thr-1422 bears the Phosphothreonine mark.

The protein belongs to the protein-tyrosine phosphatase family. In terms of assembly, interacts with filamentous actin.

Its subcellular location is the cytoplasm. It localises to the cytoskeleton. The protein resides in the cell junction. The protein localises to the focal adhesion. It is found in the cytoplasmic vesicle. Its subcellular location is the secretory vesicle. It localises to the acrosome. The catalysed reaction is O-phospho-L-tyrosyl-[protein] + H2O = L-tyrosyl-[protein] + phosphate. It carries out the reaction O-phospho-L-seryl-[protein] + H2O = L-seryl-[protein] + phosphate. It catalyses the reaction O-phospho-L-threonyl-[protein] + H2O = L-threonyl-[protein] + phosphate. Its function is as follows. Protein phosphatase which regulates actin filament dynamics. Dephosphorylates and activates the actin binding/depolymerizing factor cofilin, which subsequently binds to actin filaments and stimulates their disassembly. Inhibitory phosphorylation of cofilin is mediated by LIMK1, which may also be dephosphorylated and inactivated by this protein. Required for spermatogenesis. Involved in acrosome biogenesis, probably by regulating cofilin-mediated actin cytoskeleton remodeling during proacrosomal vesicle fusion and/or Golgi to perinuclear vesicle trafficking. The protein is Protein phosphatase Slingshot homolog 2 (SSH2) of Homo sapiens (Human).